Consider the following 448-residue polypeptide: Probable glycine dehydrogenase (decarboxylating) subunit 1 (448 aa).

The protein belongs to the GcvP family. N-terminal subunit subfamily. As to quaternary structure, the glycine cleavage system is composed of four proteins: P, T, L and H. In this organism, the P 'protein' is a heterodimer of two subunits.

The catalysed reaction is N(6)-[(R)-lipoyl]-L-lysyl-[glycine-cleavage complex H protein] + glycine + H(+) = N(6)-[(R)-S(8)-aminomethyldihydrolipoyl]-L-lysyl-[glycine-cleavage complex H protein] + CO2. Its function is as follows. The glycine cleavage system catalyzes the degradation of glycine. The P protein binds the alpha-amino group of glycine through its pyridoxal phosphate cofactor; CO(2) is released and the remaining methylamine moiety is then transferred to the lipoamide cofactor of the H protein. The sequence is that of Probable glycine dehydrogenase (decarboxylating) subunit 1 (gcvPA) from Bacillus subtilis (strain 168).